The sequence spans 203 residues: Nucleoside triphosphate pyrophosphatase (203 aa).

Aspartate 80 (proton acceptor) is an active-site residue.

The protein belongs to the Maf family. The cofactor is a divalent metal cation.

It is found in the cytoplasm. It carries out the reaction a ribonucleoside 5'-triphosphate + H2O = a ribonucleoside 5'-phosphate + diphosphate + H(+). It catalyses the reaction a 2'-deoxyribonucleoside 5'-triphosphate + H2O = a 2'-deoxyribonucleoside 5'-phosphate + diphosphate + H(+). Its function is as follows. Nucleoside triphosphate pyrophosphatase. May have a dual role in cell division arrest and in preventing the incorporation of modified nucleotides into cellular nucleic acids. This is Nucleoside triphosphate pyrophosphatase from Gluconobacter oxydans (strain 621H) (Gluconobacter suboxydans).